The primary structure comprises 402 residues: MADKVLRAKRKQFINSVSVGTINGLLDELLEKRVLNQEEMDTIKLANITVMEKARDLCDHVTKKGPRASQMFITYICNEDCYLAEILELQSGPSAETVFVTEDSKGGHPFSSETKEKLNKEGGAFPGPSGSLKFCPLEIAQKLWKENHSEIYPIMKTPTRTRLALIICNTDFQHLSRRVGADVDLREMKLLLQDLGYTVKVKENLTALEMTKELKEFAACPEHKTSDSTFLVFMSHGLQEGICGITYSNEVADILKVDTIFQMMNTLKCPSLKDKPKVIIIQACRGEKQGVVLLKDSVGNSEEGFLTDAIFEDDGIKKAHIEKDFIAFCSSTPDNVSWRHPVRGSLFIESLIKHMKEYAWSCDLEDIFRKVRFSFEQPDSRLQMPTTERVTLTKRFYLFPGH.

Residues 1–91 (MADKVLRAKR…YLAEILELQS (91 aa)) form the CARD domain. Positions 1-118 (MADKVLRAKR…PFSSETKEKL (118 aa)) are excised as a propeptide. Catalysis depends on residues H236 and C284. Positions 297-314 (SVGNSEEGFLTDAIFEDD) are excised as a propeptide. S301 carries the post-translational modification Phosphoserine.

This sequence belongs to the peptidase C14A family. Heterotetramer that consists of two anti-parallel arranged heterodimers, each one formed by a 20 kDa (Caspase-1 subunit p20) and a 10 kDa (Caspase-1 subunit p10) subunit. May be a component of the inflammasome, a protein complex which also includes PYCARD, CARD8 and NLRP2 and whose function would be the activation of pro-inflammatory caspases. Component of the AIM2 PANoptosome complex, a multiprotein complex that drives inflammatory cell death (PANoptosis). Both the p10 and p20 subunits interact with MEFV. Interacts with CARD17P/INCA and CARD18. Interacts with SERPINB1; this interaction regulates CASP1 activity. As to quaternary structure, heterotetramer that consists of two anti-parallel arranged heterodimers, each one formed by a 20 kDa (Caspase-1 subunit p20) and a 10 kDa (Caspase-1 subunit p10) subunit. The two subunits are derived from the precursor sequence by an autocatalytic mechanism. In terms of processing, ubiquitinated via 'Lys-11'-linked polyubiquitination. Deubiquitinated by USP8.

It is found in the cytoplasm. Its subcellular location is the cell membrane. It carries out the reaction Strict requirement for an Asp residue at position P1 and has a preferred cleavage sequence of Tyr-Val-Ala-Asp-|-.. Functionally, thiol protease involved in a variety of inflammatory processes by proteolytically cleaving other proteins, such as the precursors of the inflammatory cytokines interleukin-1 beta (IL1B) and interleukin 18 (IL18) as well as the pyroptosis inducer Gasdermin-D (GSDMD), into active mature peptides. Plays a key role in cell immunity as an inflammatory response initiator: once activated through formation of an inflammasome complex, it initiates a pro-inflammatory response through the cleavage of the two inflammatory cytokines IL1B and IL18, releasing the mature cytokines which are involved in a variety of inflammatory processes. Cleaves a tetrapeptide after an Asp residue at position P1. Also initiates pyroptosis, a programmed lytic cell death pathway, through cleavage of GSDMD. In contrast to cleavage of interleukin IL1B, recognition and cleavage of GSDMD is not strictly dependent on the consensus cleavage site but depends on an exosite interface on CASP1 that recognizes and binds the Gasdermin-D, C-terminal (GSDMD-CT) part. Cleaves and activates CASP7 in response to bacterial infection, promoting plasma membrane repair. Upon inflammasome activation, during DNA virus infection but not RNA virus challenge, controls antiviral immunity through the cleavage of CGAS, rendering it inactive. In apoptotic cells, cleaves SPHK2 which is released from cells and remains enzymatically active extracellularly. The polypeptide is Caspase-1 (Casp1) (Rattus norvegicus (Rat)).